The primary structure comprises 252 residues: Protein IL-40 (252 aa).

The first 18 residues, 1–18, serve as a signal peptide directing secretion; that stretch reads MALLQLLLFAMLAACGFS. Residues Asn82 and Asn177 are each glycosylated (N-linked (GlcNAc...) asparagine).

As to expression, expressed in bone marrow, spleen and lymph node.

It is found in the secreted. Probable B cell-associated cytokine that plays a role in the regulation of humoral immune responses. Involved in lymphocyte B cell development and immunoglobulin/IgA production. The sequence is that of Protein IL-40 from Mus musculus (Mouse).